The chain runs to 140 residues: Cytochrome c-type biogenesis protein CcmE (140 aa).

Residues 1 to 7 (MKRKHKR) lie on the Cytoplasmic side of the membrane. The helical; Signal-anchor for type II membrane protein transmembrane segment at 8-28 (LLFVLASFCAAGCALLFILSE) threads the bilayer. At 29-140 (LRESVSFFYT…TIPKALPEPK (112 aa)) the chain is on the periplasmic side. 2 residues coordinate heme: histidine 121 and tyrosine 125.

Belongs to the CcmE/CycJ family.

It localises to the cell inner membrane. Heme chaperone required for the biogenesis of c-type cytochromes. Transiently binds heme delivered by CcmC and transfers the heme to apo-cytochromes in a process facilitated by CcmF and CcmH. This chain is Cytochrome c-type biogenesis protein CcmE, found in Anaplasma marginale (strain Florida).